The following is a 940-amino-acid chain: UvrABC system protein A (940 aa).

31 to 38 (GLSGSGKS) is an ATP binding site. Residues 253–280 (CPICGYSMRELEPRLFSFNNPAGACPTC) form a C4-type zinc finger. ABC transporter domains lie at 310-587 (WDRR…PESL) and 607-937 (ANPE…RFLK). 640–647 (GVSGSGKS) contributes to the ATP binding site. The C4-type zinc finger occupies 740-766 (CEACQGDGVIKVEMHFLPDIYVPCDQC).

This sequence belongs to the ABC transporter superfamily. UvrA family. As to quaternary structure, forms a heterotetramer with UvrB during the search for lesions.

The protein localises to the cytoplasm. In terms of biological role, the UvrABC repair system catalyzes the recognition and processing of DNA lesions. UvrA is an ATPase and a DNA-binding protein. A damage recognition complex composed of 2 UvrA and 2 UvrB subunits scans DNA for abnormalities. When the presence of a lesion has been verified by UvrB, the UvrA molecules dissociate. This Escherichia coli O6:H1 (strain CFT073 / ATCC 700928 / UPEC) protein is UvrABC system protein A.